Here is a 171-residue protein sequence, read N- to C-terminus: Acetyltransferase PA2271 (171 aa).

An N-acetyltransferase domain is found at 3 to 162 (YRIRTSRDED…HEQEIGFAAD (160 aa)). CoA is bound by residues 84 to 86 (LSI) and 128 to 130 (PFY).

Functionally, catalyzes the transfer of an acetyl group from acetyl coenzyme A (AcCoA) to an acceptor substrate and releases both CoA and the acetylated product. It can use a variety of substrates including spermidine, spermine and N(8)-acetylspermidine, 7-aminocephalosporanic acid, colistin and thiamine. The protein is Acetyltransferase PA2271 of Pseudomonas aeruginosa (strain ATCC 15692 / DSM 22644 / CIP 104116 / JCM 14847 / LMG 12228 / 1C / PRS 101 / PAO1).